Here is a 473-residue protein sequence, read N- to C-terminus: Pyruvate kinase (473 aa).

Residue Arg-32 coordinates substrate. K(+) contacts are provided by Asn-34, Ser-36, Asp-66, and Thr-67. ATP is bound at residue 34 to 37 (NFSH). Residues Arg-73 and Lys-155 each contribute to the ATP site. Glu-221 is a binding site for Mg(2+). Substrate is bound by residues Gly-244, Asp-245, and Thr-277. Residue Asp-245 participates in Mg(2+) binding.

It belongs to the pyruvate kinase family. As to quaternary structure, homotetramer. Requires Mg(2+) as cofactor. The cofactor is K(+).

The catalysed reaction is pyruvate + ATP = phosphoenolpyruvate + ADP + H(+). It participates in carbohydrate degradation; glycolysis; pyruvate from D-glyceraldehyde 3-phosphate: step 5/5. The polypeptide is Pyruvate kinase (pyk) (Clostridium acetobutylicum (strain ATCC 824 / DSM 792 / JCM 1419 / IAM 19013 / LMG 5710 / NBRC 13948 / NRRL B-527 / VKM B-1787 / 2291 / W)).